The primary structure comprises 193 residues: Ion-translocating oxidoreductase complex subunit A (193 aa).

The next 6 membrane-spanning stretches (helical) occupy residues 4–24, 38–58, 65–85, 102–122, 134–154, and 171–191; these read LALI…KFLG, AMGM…CSYL, APLG…AVVV, VLGI…VALL, AVYG…FAAL, and SVAL…AGLV.

The protein belongs to the NqrDE/RnfAE family. In terms of assembly, the complex is composed of six subunits: RnfA, RnfB, RnfC, RnfD, RnfE and RnfG.

The protein localises to the cell inner membrane. In terms of biological role, part of a membrane-bound complex that couples electron transfer with translocation of ions across the membrane. This Alkalilimnicola ehrlichii (strain ATCC BAA-1101 / DSM 17681 / MLHE-1) protein is Ion-translocating oxidoreductase complex subunit A.